An 89-amino-acid chain; its full sequence is Small ribosomal subunit protein uS15 (89 aa).

The protein belongs to the universal ribosomal protein uS15 family. Part of the 30S ribosomal subunit. Forms a bridge to the 50S subunit in the 70S ribosome, contacting the 23S rRNA.

Functionally, one of the primary rRNA binding proteins, it binds directly to 16S rRNA where it helps nucleate assembly of the platform of the 30S subunit by binding and bridging several RNA helices of the 16S rRNA. Forms an intersubunit bridge (bridge B4) with the 23S rRNA of the 50S subunit in the ribosome. In Thiobacillus denitrificans (strain ATCC 25259 / T1), this protein is Small ribosomal subunit protein uS15.